The following is a 346-amino-acid chain: RNA polymerase II holoenzyme cyclin-like subunit (346 aa).

One can recognise a Cyclin N-terminal domain in the interval 59–158; that stretch reads NLLIKLGRRL…EMDSYLFLHH (100 aa).

This sequence belongs to the cyclin family. Cyclin C subfamily. In terms of assembly, component of the SRB8-11 complex, a regulatory module of the Mediator complex.

The protein localises to the nucleus. Component of the SRB8-11 complex. The SRB8-11 complex is a regulatory module of the Mediator complex which is itself involved in regulation of basal and activated RNA polymerase II-dependent transcription. The SRB8-11 complex may be involved in the transcriptional repression of a subset of genes regulated by Mediator. It may inhibit the association of the Mediator complex with RNA polymerase II to form the holoenzyme complex. The SRB8-11 complex phosphorylates the C-terminal domain (CTD) of the largest subunit of RNA polymerase II. The polypeptide is RNA polymerase II holoenzyme cyclin-like subunit (SSN8) (Scheffersomyces stipitis (strain ATCC 58785 / CBS 6054 / NBRC 10063 / NRRL Y-11545) (Yeast)).